The sequence spans 77 residues: Anionic peptide 17.1 (77 aa).

An N-terminal signal peptide occupies residues 1-24 (MASKTVLVLLLVSVLVSTFCTAKA).

It belongs to the non-disulfide-bridged peptide (NDBP) superfamily. Long chain multifunctional peptide (group 2) family. In terms of tissue distribution, expressed by the venom gland.

It localises to the secreted. This is Anionic peptide 17.1 from Lychas mucronatus (Chinese swimming scorpion).